Reading from the N-terminus, the 196-residue chain is Probable GTP-binding protein EngB (196 aa).

Residues 21–195 (DVSEICLIGR…YELIDKLLGS (175 aa)) enclose the EngB-type G domain. Residues 29–36 (GRSNVGKS), 56–60 (GKTRL), 75–78 (DAPG), 142–145 (TKLD), and 174–176 (ISN) contribute to the GTP site. Residues Ser-36 and Thr-58 each coordinate Mg(2+).

Belongs to the TRAFAC class TrmE-Era-EngA-EngB-Septin-like GTPase superfamily. EngB GTPase family. The cofactor is Mg(2+).

Necessary for normal cell division and for the maintenance of normal septation. The protein is Probable GTP-binding protein EngB of Mycoplasma mycoides subsp. mycoides SC (strain CCUG 32753 / NCTC 10114 / PG1).